Consider the following 178-residue polypeptide: Gamma-crystallin S (178 aa).

An N-acetylserine modification is found at S2. Residues 2–5 (SKTG) form an N-terminal arm region. Beta/gamma crystallin 'Greek key' domains lie at 6-44 (GKIS…RVEG) and 45-87 (GTWA…RAVH). Residues 88–93 (LSSGGQ) form a connecting peptide region. Beta/gamma crystallin 'Greek key' domains follow at residues 94-134 (AKIQ…KVVE) and 135-177 (GTWI…RRIV).

It belongs to the beta/gamma-crystallin family. As to quaternary structure, monomer.

Functionally, crystallins are the dominant structural components of the vertebrate eye lens. The protein is Gamma-crystallin S (Crygs) of Mus musculus (Mouse).